Here is a 405-residue protein sequence, read N- to C-terminus: Growth/differentiation factor 11 (405 aa).

An N-terminal signal peptide occupies residues 1–20 (MVLAAPLLLGFLLLALELRP). A propeptide spanning residues 21–296 (RGEAAEGPAA…VLENTKRSRR (276 aa)) is cleaved from the precursor. Residue asparagine 92 is glycosylated (N-linked (GlcNAc...) asparagine). Cystine bridges form between cysteine 302–cysteine 312, cysteine 311–cysteine 370, cysteine 339–cysteine 402, and cysteine 343–cysteine 404.

Belongs to the TGF-beta family. As to quaternary structure, homodimer; disulfide-linked. Interacts directly with ACVR2B. Interacts directly with ACVR2A. Interacts with ACVR1B, TGFBR1 and ACVR1C in an ACVR2B-dependent manner. Interacts with FST isoform 2/FS288. In terms of processing, synthesized as large precursor molecule that undergoes proteolytic cleavage by furin-like proteases. This produces an inactive form consisting of the mature C-terminal portion non-covalently bound to its cleaved N-terminal propeptide. Activation of the mature form requires additional cleavage of the propeptide by a tolloid-like metalloproteinase. In terms of tissue distribution, highly expressed in the developing limb bud, initially detected in the distal mesenchyme, and later localizing to regions around the developing bones. Is also expressed in adult dental pulp and brain.

The protein resides in the secreted. Functionally, secreted signal that acts globally to regulate anterior/posterior axial patterning during development. May play critical roles in patterning both mesodermal and neural tissues. It is required for proper vertebral patterning and orofacial development. Signals through activin receptors type-2, ACVR2A and ACVR2B, and activin receptors type-1, ACVR1B, ACVR1C and TGFBR1 leading to the phosphorylation of SMAD2 and SMAD3. The polypeptide is Growth/differentiation factor 11 (Gdf11) (Mus musculus (Mouse)).